A 116-amino-acid polypeptide reads, in one-letter code: MKTIIVFLSLLVLATKFGDAKEGVNQKQKKEVTQNEFREEYLNEMAAMSLVQQLEAIERALFENEAGRNSRQKRCNGKNVPCGANHSPCCSGLSCEETFGYGWLYKSPYCVIPSNG.

The first 20 residues, methionine 1–alanine 20, serve as a signal peptide directing secretion. A propeptide spanning residues lysine 21–arginine 74 is cleaved from the precursor. Cystine bridges form between cysteine 75–cysteine 90, cysteine 82–cysteine 95, and cysteine 89–cysteine 110.

It belongs to the neurotoxin 14 (magi-1) family. 06 (ICK-Trit) subfamily. In terms of tissue distribution, expressed by the venom gland.

The protein resides in the secreted. Functionally, ion channel inhibitor. This chain is U16-barytoxin-Tl1a, found in Trittame loki (Brush-footed trapdoor spider).